A 342-amino-acid chain; its full sequence is Phosphate acyltransferase (342 aa).

This sequence belongs to the PlsX family. As to quaternary structure, homodimer. Probably interacts with PlsY.

Its subcellular location is the cytoplasm. It carries out the reaction a fatty acyl-[ACP] + phosphate = an acyl phosphate + holo-[ACP]. The protein operates within lipid metabolism; phospholipid metabolism. Its function is as follows. Catalyzes the reversible formation of acyl-phosphate (acyl-PO(4)) from acyl-[acyl-carrier-protein] (acyl-ACP). This enzyme utilizes acyl-ACP as fatty acyl donor, but not acyl-CoA. The protein is Phosphate acyltransferase of Legionella pneumophila (strain Corby).